A 60-amino-acid polypeptide reads, in one-letter code: Arabinogalactan protein 14 (60 aa).

An N-terminal signal peptide occupies residues 1–28 (MEAMKMKLYVVVLVAVIAFSTVHQTVAA). 4-hydroxyproline occurs at positions 32, 34, and 36. Pro-32, Pro-34, and Pro-36 each carry an O-linked (Ara...) hydroxyproline glycan. The GPI-anchor amidated serine moiety is linked to residue Ser-38. A propeptide spans 39-60 (DASSFIPTFFASVAVMAFGFFF) (removed in mature form).

Belongs to the AG-peptide AGP family. Post-translationally, contains 4-hydroxyproline; hydroxylated on Pro-32, Pro-34 and Pro-36. In terms of processing, O-glycosylated on hydroxyprolines; noncontiguous hydroxylproline residues are glycosylated with arabinogalactan.

The protein resides in the cell membrane. Functionally, proteoglycan that seems to be implicated in diverse developmental roles such as differentiation, cell-cell recognition, embryogenesis and programmed cell death. Involved in the regulation of root hair elongation. The chain is Arabinogalactan protein 14 from Arabidopsis thaliana (Mouse-ear cress).